The primary structure comprises 358 residues: Myb family transcription factor IPN2 (358 aa).

Residues 1-20 form a disordered region; sequence MERMFPPKKPSTMNSHDRPM. The region spanning 32–92 is the HTH myb-type domain; it reads TDPKPRLRWT…HLQKFRLGKQ (61 aa). Positions 63–88 form a DNA-binding region, H-T-H motif; the sequence is PKTIMRVMGVKGLTLYHLKSHLQKFR. Positions 127–171 form a coiled coil; sequence NMNEMQIEVQRRLHEQLEVQKHLQLRIEAQGKYMQSILEKAYQTL. The short motif at 139–144 is the LHEQLE element; the sequence is LHEQLE. The interval 310–358 is disordered; the sequence is IYDSKPEEKKFDASMKLERPSPRRAPLGERMSPMITTGTMAQGRSSPFG. Over residues 311 to 330 the composition is skewed to basic and acidic residues; that stretch reads YDSKPEEKKFDASMKLERPS. A compositionally biased stretch (polar residues) spans 343–358; sequence MITTGTMAQGRSSPFG.

Belongs to the MYB-CC family. Interacts with NSP2. In terms of tissue distribution, expressed in leaves, stems, nodules and roots.

It is found in the nucleus. Its function is as follows. Transcriptional regulator required for Nod-factor-induced gene expression. Transcription activator involved in the induction of NIN and ENOD40 genes, which are required for rhizobial infection and early nodule development. Possesses strong transactivation activity in vitro. Does not seem to contribute to the early steps of the arbuscular mycorrhizal fungus infection and colonization processes in roots. In Lotus japonicus (Lotus corniculatus var. japonicus), this protein is Myb family transcription factor IPN2.